A 115-amino-acid polypeptide reads, in one-letter code: Non-specific lipid-transfer protein 4.2 (115 aa).

Positions 1-25 (MARAAATQLVLVAMVAAMLIVATDA) are cleaved as a signal peptide. Intrachain disulfides connect Cys29-Cys77, Cys39-Cys54, Cys55-Cys97, and Cys75-Cys111.

Belongs to the plant LTP family.

Its function is as follows. Plant non-specific lipid-transfer proteins transfer phospholipids as well as galactolipids across membranes. May play a role in wax or cutin deposition in the cell walls of expanding epidermal cells and certain secretory tissues. The protein is Non-specific lipid-transfer protein 4.2 (LTP4.2) of Hordeum vulgare (Barley).